Consider the following 538-residue polypeptide: Importin subunit alpha-6 (538 aa).

The IBB domain occupies 1–58 (MSYKPSAKTEVRRNRYKVSVDADEGRRRREDNMVEIRKNKREENLQKKRREGFNPSMA). Positions 1–69 (MSYKPSAKTE…QPGQDFSSSL (69 aa)) are disordered. Over residues 7 to 46 (AKTEVRRNRYKVSVDADEGRRRREDNMVEIRKNKREENLQ) the composition is skewed to basic and acidic residues. Positions 56–69 (SMASQPGQDFSSSL) are enriched in polar residues. ARM repeat units lie at residues 109–149 (NPPI…NIAS), 152–191 (SENTRVIIDSGAVPLFVKLLSSASEEVREQAVWALGNVAG), 194–234 (PKCR…NFCR), 236–275 (KPQPAFEQTKAALPALERLLHSTDEEVLTDASWALSYLSD), 278–317 (NEKIQTVIDAGVIPRLVQLLAHPSPSVLIPALRTIGNIVT), 320–360 (DIQT…NITA), 363–402 (TSQIQEVFQAGIIRPLINLLEIGEFEIKKEAVWAISNATS), and 406–445 (HDQIKFLVSQGCIRPLCDLLPCPDPRVVTVTLEGLENILK).

The protein belongs to the importin alpha family. Forms a complex with importin subunit beta-1.

Its subcellular location is the nucleus envelope. Functionally, binds to conventional NLS motifs and mediates nuclear protein import across the nuclear envelope. Acts as a cellular receptor for the nuclear import of the virD2 protein of Agrobacterium, but is not essential for Agrobacterium-mediated root transformation. The protein is Importin subunit alpha-6 of Arabidopsis thaliana (Mouse-ear cress).